Consider the following 640-residue polypeptide: DNA gyrase subunit B (640 aa).

A Toprim domain is found at 423–537 (AELYIVEGDS…NGNIYIAQPP (115 aa)). Mg(2+) contacts are provided by glutamate 429, aspartate 502, and aspartate 504.

This sequence belongs to the type II topoisomerase GyrB family. Heterotetramer, composed of two GyrA and two GyrB chains. In the heterotetramer, GyrA contains the active site tyrosine that forms a transient covalent intermediate with DNA, while GyrB binds cofactors and catalyzes ATP hydrolysis. The cofactor is Mg(2+). It depends on Mn(2+) as a cofactor. Ca(2+) serves as cofactor.

The protein resides in the cytoplasm. It catalyses the reaction ATP-dependent breakage, passage and rejoining of double-stranded DNA.. Functionally, a type II topoisomerase that negatively supercoils closed circular double-stranded (ds) DNA in an ATP-dependent manner to modulate DNA topology and maintain chromosomes in an underwound state. Negative supercoiling favors strand separation, and DNA replication, transcription, recombination and repair, all of which involve strand separation. Also able to catalyze the interconversion of other topological isomers of dsDNA rings, including catenanes and knotted rings. Type II topoisomerases break and join 2 DNA strands simultaneously in an ATP-dependent manner. The protein is DNA gyrase subunit B of Spiroplasma citri.